The primary structure comprises 116 residues: MSVESFTPTALEFTPGAAHKVKTLVSEEGNDRLKLRVFVTGGGCSGFQYGFTFDEDVAEDDTIVEREGVALVVDPMSFQYLAGAEVDYQEGLEGSRFVIKNPNATTTCGCGSSFSI.

Iron-sulfur cluster is bound by residues Cys-44, Cys-108, and Cys-110.

The protein belongs to the HesB/IscA family. Homodimer. The cofactor is iron-sulfur cluster.

In terms of biological role, required for insertion of 4Fe-4S clusters for at least IspG. The chain is Iron-sulfur cluster insertion protein ErpA from Pseudomonas entomophila (strain L48).